A 281-amino-acid polypeptide reads, in one-letter code: BEN domain-containing protein 6 (281 aa).

Disordered regions lie at residues 15-62 and 143-172; these read VLRK…ETPL and SFAS…PGEK. Residues 19 to 99 adopt a coiled-coil conformation; the sequence is RKRKRTETAN…RLRQSLVMLQ (81 aa). Over residues 143–160 the composition is skewed to low complexity; that stretch reads SFASLCSNSNSTSSSPSS. A compositionally biased stretch (basic and acidic residues) spans 162–172; that stretch reads KAEEEQHPGEK. The region spanning 171 to 271 is the BEN domain; that stretch reads EKQFTIERWQ…NCTKKPNASK (101 aa).

As to quaternary structure, interacts (via BEN domain) with RBPJ.

Its subcellular location is the nucleus. In terms of biological role, acts as a corepressor of recombining binding protein suppressor hairless (RBPJ) and inhibits Notch signaling in neural stem cells, thereby opposing their self-renewal and promoting neurogenesis. The chain is BEN domain-containing protein 6 (Bend6) from Mus musculus (Mouse).